A 607-amino-acid chain; its full sequence is MEAIRIGFGLPNVHSVPLCLTTTRCLFPRQRLLHSHTPSWKPAKQQDFFVASSSKKSSDDLESSLPTPHFSPSLWGDHFLSVSLNRAEFDELEREIETTKPLARDKLMSSESSDKEKIRLIHLLVSMGISYHFDKEIQDILKHSFTKLDDIIVGEDDLETISIMFEVFKLYGHKMSCDAFDRFRGNDGRFKESLVRDFRGMLQLFEVAHLGTPCEVIMDEALSFTRNHLESLTSGNASTASPHLLKHIQNSLYIPRYCNIEVLVAREYISYYEQEEGHDEILLKFAKLNFNFCQFHYVQELKTLTKWWRDLDLASKLPYIRDRLVESHLVALGPYFEPHYSLGRIIVAKINMIMVVVDDTYDAYATLPQVKALTECLQRWSIEVSDKLPDYLRIVLGSLFDVMGEIEREMRPLGRLYRVKQVVEKIKIITKAYQEIAKWARTGHVSTFDEYMKVGVLTAGMADYAAYCFIGMEDINEKEAFEWLNSNPLIIKHLTAMFRLANDVGTYETEINRGEVANGLNCYMKQYGVTKEEASRELRKMYVYRKKVVVEEFMNSHDHVPRQVLLRCLNIARIFDVFYTEGDGYSEPKGKIEHFMTSLYLHPIPLS.

Mg(2+) contacts are provided by aspartate 358, aspartate 362, asparagine 502, threonine 506, and glutamate 510. Positions 358-362 (DDTYD) match the DDXXD motif motif.

This sequence belongs to the terpene synthase family. Tpsa subfamily. Mg(2+) is required as a cofactor. Mn(2+) serves as cofactor. As to expression, predominantly expressed in flowers but also in siliques, roots, leaves and stems.

It localises to the cytoplasm. The protein operates within secondary metabolite biosynthesis; terpenoid biosynthesis. This Arabidopsis thaliana (Mouse-ear cress) protein is Terpenoid synthase 29 (TPS29).